Reading from the N-terminus, the 599-residue chain is PR domain zinc finger protein 5 (599 aa).

Positions 8–124 (DRFALKSSRV…TDTELLIGYL (117 aa)) constitute an SET domain. C2H2-type zinc fingers lie at residues 167–190 (FACP…QSLH), 199–221 (FKCE…FEQH), 231–256 (FVCK…ENVH), 264–286 (LICS…RKIH), 289–311 (FDCQ…MITH), 317–339 (YNCE…KVIH), 345–367 (YQCK…KKTH), 373–395 (FQCD…LLIH), 401–424 (FKCH…QVVH), 430–452 (YRCE…KKTH), 458–480 (KVCP…IRSH), and 486–508 (YQCP…IRTH). The segment at 514–536 (YQCSECSKAFSQKRGLDEHKRTH) adopts a C2H2-type 13; degenerate zinc-finger fold. 2 consecutive C2H2-type zinc fingers follow at residues 542 to 564 (FQCD…KMTH) and 571 to 594 (AECH…DNIH).

It belongs to the class V-like SAM-binding methyltransferase superfamily. As to quaternary structure, interacts with EHMT2/G9A, GFI1 and HDAC1.

Its subcellular location is the nucleus. Its function is as follows. Sequence-specific DNA-binding transcription factor. Represses transcription at least in part by recruitment of the histone methyltransferase EHMT2/G9A and histone deacetylases such as HDAC1. Regulates hematopoiesis-associated protein-coding and microRNA (miRNA) genes. May regulate the expression of proteins involved in extracellular matrix development and maintenance, connective tissue components and molecules regulating cell migration and adhesion. May cause G2/M arrest and apoptosis in cancer cells. In Mus musculus (Mouse), this protein is PR domain zinc finger protein 5 (Prdm5).